Here is a 215-residue protein sequence, read N- to C-terminus: Probable GTP-binding protein EngB (215 aa).

An EngB-type G domain is found at 30 to 204; sequence EGLEVAFAGR…QMVLAQWLGL (175 aa). GTP is bound by residues 38-45, 64-68, 82-85, 149-152, and 182-185; these read GRSNAGKS, GRTQL, DLPG, TKAD, and LFSA. Positions 45 and 66 each coordinate Mg(2+).

The protein belongs to the TRAFAC class TrmE-Era-EngA-EngB-Septin-like GTPase superfamily. EngB GTPase family. The cofactor is Mg(2+).

In terms of biological role, necessary for normal cell division and for the maintenance of normal septation. This Pseudomonas paraeruginosa (strain DSM 24068 / PA7) (Pseudomonas aeruginosa (strain PA7)) protein is Probable GTP-binding protein EngB.